The primary structure comprises 81 residues: MQSLQVLAIVALVVATIIAIVVWTIVFIEYRKILRQRKIDRLINRITERAEDSGNESDGDQEELSALVERGHLAPWDVDDL.

Residues 1 to 7 (MQSLQVL) are Extracellular-facing. A helical membrane pass occupies residues 8 to 28 (AIVALVVATIIAIVVWTIVFI). The Cytoplasmic segment spans residues 29 to 81 (EYRKILRQRKIDRLINRITERAEDSGNESDGDQEELSALVERGHLAPWDVDDL). The disordered stretch occupies residues 50 to 81 (AEDSGNESDGDQEELSALVERGHLAPWDVDDL). Phosphoserine; by host CK2 occurs at positions 53 and 57. Acidic residues predominate over residues 53–63 (SGNESDGDQEE).

It belongs to the HIV-1 VPU protein family. As to quaternary structure, homopentamer. Interacts with host CD4 and BRTC; these interactions induce proteasomal degradation of CD4. Interacts with host BST2; this interaction leads to the degradation of host BST2. Interacts with host FBXW11. Interacts with host AP1M1; this interaction plays a role in the mistrafficking and subsequent degradation of host BST2. Interacts with host RANBP2; this interaction allows Vpu to down-regulate host BLM sumoylation. Post-translationally, phosphorylated by host CK2. This phosphorylation is necessary for interaction with human BTRC and degradation of CD4.

It is found in the host membrane. With respect to regulation, ion channel activity is inhibited by hexamethylene amiloride in vitro. Its function is as follows. Enhances virion budding by targeting host CD4 and Tetherin/BST2 to proteasome degradation. Degradation of CD4 prevents any unwanted premature interactions between viral Env and its host receptor CD4 in the endoplasmic reticulum. Degradation of antiretroviral protein Tetherin/BST2 is important for virion budding, as BST2 tethers new viral particles to the host cell membrane. Mechanistically, Vpu bridges either CD4 or BST2 to BTRC, a substrate recognition subunit of the Skp1/Cullin/F-box protein E3 ubiquitin ligase, induces their ubiquitination and subsequent proteasomal degradation. The alteration of the E3 ligase specificity by Vpu seems to promote the degradation of host IKBKB, leading to NF-kappa-B down-regulation and subsequent apoptosis. Acts as a viroporin that forms an oligomeric ion channel in membranes. Modulates the host DNA repair mechanisms to promote degradation of nuclear viral cDNA in cells that are already productively infected in order to suppress immune sensing and proviral hyper-integration (superinfection). Manipulates PML-NBs and modulates SUMOylation of host BLM protein thereby enhancing its DNA-end processing activity toward viral unintegrated linear DNA. Also inhibits RAD52-mediated homologous repair of viral cDNA, preventing the generation of dead-end circular forms of single copies of the long terminal repeat and permitting sustained nucleolytic attack. The protein is Protein Vpu of Human immunodeficiency virus type 1 group M subtype B (isolate YU-2) (HIV-1).